The following is a 297-amino-acid chain: Polyhedral envelope protein (297 aa).

This sequence belongs to the baculoviridae PE family.

It localises to the virion membrane. Major component of the polyhedra envelope. This is Polyhedral envelope protein from Orgyia pseudotsugata (Douglas-fir tussock moth).